We begin with the raw amino-acid sequence, 131 residues long: uncharacterized protein (131 aa).

This is an uncharacterized protein from Haemophilus influenzae (strain ATCC 51907 / DSM 11121 / KW20 / Rd).